Reading from the N-terminus, the 113-residue chain is Large ribosomal subunit protein uL22 (113 aa).

The protein belongs to the universal ribosomal protein uL22 family. In terms of assembly, part of the 50S ribosomal subunit.

Its function is as follows. This protein binds specifically to 23S rRNA; its binding is stimulated by other ribosomal proteins, e.g. L4, L17, and L20. It is important during the early stages of 50S assembly. It makes multiple contacts with different domains of the 23S rRNA in the assembled 50S subunit and ribosome. The globular domain of the protein is located near the polypeptide exit tunnel on the outside of the subunit, while an extended beta-hairpin is found that lines the wall of the exit tunnel in the center of the 70S ribosome. The protein is Large ribosomal subunit protein uL22 of Roseiflexus sp. (strain RS-1).